Reading from the N-terminus, the 340-residue chain is Glyceraldehyde-3-phosphate dehydrogenase 2 (340 aa).

Residues 12–13, R78, and T120 contribute to the NADP(+) site; that span reads RI. Residues 151 to 153 and T182 each bind D-glyceraldehyde 3-phosphate; that span reads SCT. C152 functions as the Nucleophile in the catalytic mechanism. Position 183 (N183) interacts with NADP(+). Residues R197, 210–211, and R233 each bind D-glyceraldehyde 3-phosphate; that span reads TG. N315 is an NADP(+) binding site.

Belongs to the glyceraldehyde-3-phosphate dehydrogenase family. As to quaternary structure, homotetramer. Interacts with BrxC. In terms of processing, in response to oxidative stress, the active site Cys likely reacts with bacillithiol (BSH) to form mixed disulfides to protect the Cys residue against overoxidation. S-bacillithiolation presumably leads to loss of catalytic activity. Debacillithiolation by monothiol bacilliredoxin BrxC restores the activity.

The protein resides in the cytoplasm. The catalysed reaction is D-glyceraldehyde 3-phosphate + phosphate + NADP(+) = (2R)-3-phospho-glyceroyl phosphate + NADPH + H(+). It carries out the reaction D-glyceraldehyde 3-phosphate + phosphate + NAD(+) = (2R)-3-phospho-glyceroyl phosphate + NADH + H(+). Its pathway is carbohydrate biosynthesis; gluconeogenesis. In terms of biological role, involved in the gluconeogenesis. Catalyzes the oxidative phosphorylation of glyceraldehyde 3-phosphate (G3P) to 1,3-bisphosphoglycerate (BPG) using the cofactor NADP. The first reaction step involves the formation of a hemiacetal intermediate between G3P and a cysteine residue, and this hemiacetal intermediate is then oxidized to a thioester, with concomitant reduction of NADP to NADPH. The reduced NADPH is then exchanged with the second NADP, and the thioester is attacked by a nucleophilic inorganic phosphate to produce BPG. In Bacillus subtilis (strain 168), this protein is Glyceraldehyde-3-phosphate dehydrogenase 2.